Reading from the N-terminus, the 651-residue chain is PTS system sucrose-specific EIIBCA component (651 aa).

The PTS EIIB type-1 domain occupies 3–86; the sequence is HQEVADRVLN…IVKTGLKEVT (84 aa). C25 acts as the Phosphocysteine intermediate; for EIIB activity in catalysis. Helical transmembrane passes span 109–129, 158–178, 182–202, 204–224, 226–246, 264–284, 303–323, 345–365, 404–424, and 444–464; these read VLSD…LLMA, MINA…GFSA, FGGN…PSLV, GYSV…VFGL, VAQA…FILA, FTPM…VGPV, TGWI…ITGL, FIFP…LAIF, FVFA…FHVL, and IPAF…PTFI. The PTS EIIC type-1 domain occupies 121–481; that stretch reads LVAGGLLMAL…DDRDQVKSPA (361 aa). Residues 510 to 614 enclose the PTS EIIA type-1 domain; it reads DQVFSAEIMG…DPTVMLIVTN (105 aa). H562 (tele-phosphohistidine intermediate; for EIIA activity) is an active-site residue.

Its subcellular location is the cell membrane. The enzyme catalyses N(pros)-phospho-L-histidyl-[protein](out) + sucrose = sucrose 6(G)-phosphate(in) + L-histidyl-[protein]. In terms of biological role, the phosphoenolpyruvate-dependent sugar phosphotransferase system (sugar PTS), a major carbohydrate active transport system, catalyzes the phosphorylation of incoming sugar substrates concomitantly with their translocation across the cell membrane. This system is involved in sucrose transport. In Pediococcus pentosaceus, this protein is PTS system sucrose-specific EIIBCA component (scrA).